Consider the following 290-residue polypeptide: MRLSAFAPAKVNLFLHVGGPDGEGYHPISSLMVFADVGDRVNLQPADAPAFETSGPFGDQIPAGGDNLVVRAGQAFHRRLGGPVPPYRLILEKHLPIAAGLGGGSSDAGAALKLLRDALAPALSDDDLEALAASLGADGAACLRARALIAEGRGERLSPAPRLPELNAVLVNPGAPSPTGAVYRAYDAGVHPDGAAMPPMPDHLESAEEAAAWLAFATRNDLEAPAVRLEPHIGEVLDVLRGEPESLLVRMSGSGATCFALCASDIEAEGLAERLETMRPDWWVRRCRLS.

Lys10 is an active-site residue. Position 96–106 (96–106 (PIAAGLGGGSS)) interacts with ATP. The active site involves Asp138.

It belongs to the GHMP kinase family. IspE subfamily.

The enzyme catalyses 4-CDP-2-C-methyl-D-erythritol + ATP = 4-CDP-2-C-methyl-D-erythritol 2-phosphate + ADP + H(+). Its pathway is isoprenoid biosynthesis; isopentenyl diphosphate biosynthesis via DXP pathway; isopentenyl diphosphate from 1-deoxy-D-xylulose 5-phosphate: step 3/6. Catalyzes the phosphorylation of the position 2 hydroxy group of 4-diphosphocytidyl-2C-methyl-D-erythritol. The polypeptide is 4-diphosphocytidyl-2-C-methyl-D-erythritol kinase (Caulobacter vibrioides (strain NA1000 / CB15N) (Caulobacter crescentus)).